Consider the following 210-residue polypeptide: Prolactin (210 aa).

Residues 1-23 (MARRSQGTKLHLAVLCLVVSCHA) form the signal peptide. Intrachain disulfides connect Cys69–Cys183 and Cys200–Cys210.

The protein belongs to the somatotropin/prolactin family. In terms of tissue distribution, pituitary gland.

The protein resides in the secreted. The polypeptide is Prolactin (prl) (Coregonus autumnalis (Arctic cisco)).